We begin with the raw amino-acid sequence, 265 residues long: 4-hydroxy-tetrahydrodipicolinate reductase (265 aa).

Residues 7–12 (GASGRM), aspartate 33, 96–98 (GTT), and 120–123 (AANM) each bind NAD(+). Histidine 153 acts as the Proton donor/acceptor in catalysis. Histidine 154 provides a ligand contact to (S)-2,3,4,5-tetrahydrodipicolinate. Catalysis depends on lysine 157, which acts as the Proton donor. 163–164 (GT) contributes to the (S)-2,3,4,5-tetrahydrodipicolinate binding site.

This sequence belongs to the DapB family.

The protein resides in the cytoplasm. It carries out the reaction (S)-2,3,4,5-tetrahydrodipicolinate + NAD(+) + H2O = (2S,4S)-4-hydroxy-2,3,4,5-tetrahydrodipicolinate + NADH + H(+). The catalysed reaction is (S)-2,3,4,5-tetrahydrodipicolinate + NADP(+) + H2O = (2S,4S)-4-hydroxy-2,3,4,5-tetrahydrodipicolinate + NADPH + H(+). It functions in the pathway amino-acid biosynthesis; L-lysine biosynthesis via DAP pathway; (S)-tetrahydrodipicolinate from L-aspartate: step 4/4. Its function is as follows. Catalyzes the conversion of 4-hydroxy-tetrahydrodipicolinate (HTPA) to tetrahydrodipicolinate. This is 4-hydroxy-tetrahydrodipicolinate reductase from Cupriavidus metallidurans (strain ATCC 43123 / DSM 2839 / NBRC 102507 / CH34) (Ralstonia metallidurans).